We begin with the raw amino-acid sequence, 297 residues long: Tyrosine recombinase XerC (297 aa).

A Core-binding (CB) domain is found at 1–83; that stretch reads MAILDEFDEH…AVKAFTAWAK (83 aa). The region spanning 104 to 291 is the Tyr recombinase domain; sequence TLPAVLRQDQ…AVSRLRVVHD (188 aa). Residues Arg148, Lys172, His243, Arg246, and His269 contribute to the active site. Residue Tyr278 is the O-(3'-phospho-DNA)-tyrosine intermediate of the active site.

Belongs to the 'phage' integrase family. XerC subfamily. Forms a cyclic heterotetrameric complex composed of two molecules of XerC and two molecules of XerD.

It is found in the cytoplasm. Its function is as follows. Site-specific tyrosine recombinase, which acts by catalyzing the cutting and rejoining of the recombining DNA molecules. The XerC-XerD complex is essential to convert dimers of the bacterial chromosome into monomers to permit their segregation at cell division. It also contributes to the segregational stability of plasmids. This is Tyrosine recombinase XerC from Mycobacterium leprae (strain TN).